The chain runs to 115 residues: Putative HNH nuclease YajD (115 aa).

Positions 27-75 (CGRCSREFVYSNLRELTVHHIDHDHTNNPEDGSNWELLCLYCHDHEHSK) constitute an HNH domain.

The protein belongs to the HNH nuclease family.

This is Putative HNH nuclease YajD (yajD) from Salmonella typhi.